The following is a 171-amino-acid chain: MPLLDSFTVDHTRMEAPAVRVAKTMNTPHGDAITVFDLRFCVPNKEVMPERGIHTLEHLFAGFMRNHLNGNGVEIIDISPMGCRTGFYMSLIGTPDEQRVADAWKAAMEDVLKVQDQNQIPELNVYQCGTYQMHSLQEAQDIARSILERDVRINSNEELALPEEKLQELHI.

Residues H54, H58, and C128 each contribute to the Fe cation site.

This sequence belongs to the LuxS family. In terms of assembly, homodimer. The cofactor is Fe cation.

It carries out the reaction S-(5-deoxy-D-ribos-5-yl)-L-homocysteine = (S)-4,5-dihydroxypentane-2,3-dione + L-homocysteine. Functionally, involved in the synthesis of autoinducer 2 (AI-2) which is secreted by bacteria and is used to communicate both the cell density and the metabolic potential of the environment. The regulation of gene expression in response to changes in cell density is called quorum sensing. Catalyzes the transformation of S-ribosylhomocysteine (RHC) to homocysteine (HC) and 4,5-dihydroxy-2,3-pentadione (DPD). In Escherichia coli (strain 55989 / EAEC), this protein is S-ribosylhomocysteine lyase.